The primary structure comprises 242 residues: Small ribosomal subunit protein uS3 (242 aa).

The KH type-2 domain maps to 39-110 (IRKFIHKKYG…QVRINVVEVE (72 aa)). A disordered region spans residues 221 to 242 (GASPRRRASRRPQQFEDRSNEG). Residues 233–242 (QQFEDRSNEG) are compositionally biased toward basic and acidic residues.

This sequence belongs to the universal ribosomal protein uS3 family. As to quaternary structure, part of the 30S ribosomal subunit. Forms a tight complex with proteins S10 and S14.

In terms of biological role, binds the lower part of the 30S subunit head. Binds mRNA in the 70S ribosome, positioning it for translation. This Parasynechococcus marenigrum (strain WH8102) protein is Small ribosomal subunit protein uS3.